The following is a 73-amino-acid chain: Translation initiation factor IF-1 (73 aa).

One can recognise an S1-like domain in the interval 1-73 (MPKKDGAIEI…SRGRIVYRYK (73 aa)).

The protein belongs to the IF-1 family. In terms of assembly, component of the 30S ribosomal translation pre-initiation complex which assembles on the 30S ribosome in the order IF-2 and IF-3, IF-1 and N-formylmethionyl-tRNA(fMet); mRNA recruitment can occur at any time during PIC assembly.

It is found in the cytoplasm. Its function is as follows. One of the essential components for the initiation of protein synthesis. Stabilizes the binding of IF-2 and IF-3 on the 30S subunit to which N-formylmethionyl-tRNA(fMet) subsequently binds. Helps modulate mRNA selection, yielding the 30S pre-initiation complex (PIC). Upon addition of the 50S ribosomal subunit IF-1, IF-2 and IF-3 are released leaving the mature 70S translation initiation complex. This chain is Translation initiation factor IF-1, found in Frankia alni (strain DSM 45986 / CECT 9034 / ACN14a).